The primary structure comprises 390 residues: Methylthioribose-1-phosphate isomerase (390 aa).

D263 functions as the Proton donor in the catalytic mechanism.

This sequence belongs to the eIF-2B alpha/beta/delta subunits family. MtnA subfamily.

The protein resides in the cytoplasm. It localises to the nucleus. The enzyme catalyses 5-(methylsulfanyl)-alpha-D-ribose 1-phosphate = 5-(methylsulfanyl)-D-ribulose 1-phosphate. Its pathway is amino-acid biosynthesis; L-methionine biosynthesis via salvage pathway; L-methionine from S-methyl-5-thio-alpha-D-ribose 1-phosphate: step 1/6. Catalyzes the interconversion of methylthioribose-1-phosphate (MTR-1-P) into methylthioribulose-1-phosphate (MTRu-1-P). This chain is Methylthioribose-1-phosphate isomerase, found in Meyerozyma guilliermondii (strain ATCC 6260 / CBS 566 / DSM 6381 / JCM 1539 / NBRC 10279 / NRRL Y-324) (Yeast).